The sequence spans 188 residues: Ubiquitin-like protein 4B (188 aa).

The Ubiquitin-like domain maps to 1-76 (MFLTVKLLLG…INVIMRPPED (76 aa)). The interval 146–188 (EEKEAPAVASELEQNNGGGGGGGGTGGEGGGKKEEEEGEEADQ) is disordered. The segment covering 161 to 174 (NGGGGGGGGTGGEG) has biased composition (gly residues).

Expressed specifically in post-meiotic male germ cells of the testis. Abundantly expressed in stage 14-16 spermatids.

The protein resides in the cytoplasm. This chain is Ubiquitin-like protein 4B (Ubl4b), found in Mus musculus (Mouse).